The chain runs to 476 residues: Siroheme synthase (476 aa).

The precorrin-2 dehydrogenase /sirohydrochlorin ferrochelatase stretch occupies residues 1-204 (MDYFPVFLNI…GKDQAAQDYL (204 aa)). NAD(+)-binding positions include 22–23 (SV) and 43–44 (PT). S129 bears the Phosphoserine mark. The tract at residues 218–476 (GEVYLVGAGP…GNTPGYSKHP (259 aa)) is uroporphyrinogen-III C-methyltransferase. S-adenosyl-L-methionine is bound at residue P227. The Proton acceptor role is filled by D250. K272 functions as the Proton donor in the catalytic mechanism. S-adenosyl-L-methionine is bound by residues 303-305 (GGD), I308, 333-334 (TA), M385, and G414.

This sequence in the N-terminal section; belongs to the precorrin-2 dehydrogenase / sirohydrochlorin ferrochelatase family. In the C-terminal section; belongs to the precorrin methyltransferase family.

The enzyme catalyses uroporphyrinogen III + 2 S-adenosyl-L-methionine = precorrin-2 + 2 S-adenosyl-L-homocysteine + H(+). It carries out the reaction precorrin-2 + NAD(+) = sirohydrochlorin + NADH + 2 H(+). The catalysed reaction is siroheme + 2 H(+) = sirohydrochlorin + Fe(2+). It functions in the pathway cofactor biosynthesis; adenosylcobalamin biosynthesis; precorrin-2 from uroporphyrinogen III: step 1/1. Its pathway is cofactor biosynthesis; adenosylcobalamin biosynthesis; sirohydrochlorin from precorrin-2: step 1/1. It participates in porphyrin-containing compound metabolism; siroheme biosynthesis; precorrin-2 from uroporphyrinogen III: step 1/1. The protein operates within porphyrin-containing compound metabolism; siroheme biosynthesis; siroheme from sirohydrochlorin: step 1/1. It functions in the pathway porphyrin-containing compound metabolism; siroheme biosynthesis; sirohydrochlorin from precorrin-2: step 1/1. Its function is as follows. Multifunctional enzyme that catalyzes the SAM-dependent methylations of uroporphyrinogen III at position C-2 and C-7 to form precorrin-2 via precorrin-1. Then it catalyzes the NAD-dependent ring dehydrogenation of precorrin-2 to yield sirohydrochlorin. Finally, it catalyzes the ferrochelation of sirohydrochlorin to yield siroheme. In Nitrosomonas eutropha (strain DSM 101675 / C91 / Nm57), this protein is Siroheme synthase.